Consider the following 292-residue polypeptide: MFTGSIVAIVTPMDEKGNVCRASLKKLIDYHVASGTSAIVSVGTTGESATLNHDEHADVVMMTLELADGRIPVIAGTGANATAEAISLTQRFNDSGIVGCLTVTPYYNRPSQEGLYQHFKAIAEHTDLPQILYNVPSRTGCDLLPETVGRLAKVKNIIGIKEATGNLTRVNQIKELVSDDFVLLSGDDASALDFMQLGGHGVISVTANVAARDMAQMCKLAAEGHFAEARVINQRLMPLHNKLFVEPNPIPVKWACKELGLVATDTLRLPMTPITDSGRETVRAALKHAGLL.

Position 45 (threonine 45) interacts with pyruvate. Tyrosine 133 (proton donor/acceptor) is an active-site residue. Catalysis depends on lysine 161, which acts as the Schiff-base intermediate with substrate. Isoleucine 203 is a binding site for pyruvate.

The protein belongs to the DapA family. In terms of assembly, homotetramer; dimer of dimers.

The protein localises to the cytoplasm. It catalyses the reaction L-aspartate 4-semialdehyde + pyruvate = (2S,4S)-4-hydroxy-2,3,4,5-tetrahydrodipicolinate + H2O + H(+). It participates in amino-acid biosynthesis; L-lysine biosynthesis via DAP pathway; (S)-tetrahydrodipicolinate from L-aspartate: step 3/4. Its function is as follows. Catalyzes the condensation of (S)-aspartate-beta-semialdehyde [(S)-ASA] and pyruvate to 4-hydroxy-tetrahydrodipicolinate (HTPA). The sequence is that of 4-hydroxy-tetrahydrodipicolinate synthase from Shigella boydii serotype 18 (strain CDC 3083-94 / BS512).